Reading from the N-terminus, the 370-residue chain is 4-hydroxy-3-methylbut-2-en-1-yl diphosphate synthase (flavodoxin) (370 aa).

Residues Cys-270, Cys-273, Cys-305, and Glu-312 each coordinate [4Fe-4S] cluster.

The protein belongs to the IspG family. [4Fe-4S] cluster is required as a cofactor.

It catalyses the reaction (2E)-4-hydroxy-3-methylbut-2-enyl diphosphate + oxidized [flavodoxin] + H2O + 2 H(+) = 2-C-methyl-D-erythritol 2,4-cyclic diphosphate + reduced [flavodoxin]. Its pathway is isoprenoid biosynthesis; isopentenyl diphosphate biosynthesis via DXP pathway; isopentenyl diphosphate from 1-deoxy-D-xylulose 5-phosphate: step 5/6. Functionally, converts 2C-methyl-D-erythritol 2,4-cyclodiphosphate (ME-2,4cPP) into 1-hydroxy-2-methyl-2-(E)-butenyl 4-diphosphate. This Hamiltonella defensa subsp. Acyrthosiphon pisum (strain 5AT) protein is 4-hydroxy-3-methylbut-2-en-1-yl diphosphate synthase (flavodoxin).